Here is a 131-residue protein sequence, read N- to C-terminus: C-glycoside deglycosidase beta subunit (131 aa).

Belongs to the C-glycoside deglycosidase beta subunit family. As to quaternary structure, heterodimer composed of an alpha subunit (CarB) and a beta subunit (CarC). A divalent metal cation is required as a cofactor.

It catalyses the reaction 3''-dehydroisovitexin = 1,5-anhydro-D-erythro-hex-1-en-3-ulose + apigenin. The catalysed reaction is 3''-dehydroisoorientin = 1,5-anhydro-D-erythro-hex-1-en-3-ulose + luteolin. Its function is as follows. Carbon-carbon bond-cleaving enzyme which participates in the metabolism of C-glycosides. Acts on the C6-glycosylated compounds 3''-dehydroisovitexin (3''-oxo-isovitexin) and 3''-dehydroisoorientin (3''-oxo-homoorientin). Shows weak activity with 3'-dehydromangiferin (3'-oxo-mangiferin). The protein is C-glycoside deglycosidase beta subunit of Microbacterium trichothecenolyticum (Aureobacterium trichothecenolyticum).